The primary structure comprises 496 residues: Probable cytosol aminopeptidase (496 aa).

Residues K266 and D271 each contribute to the Mn(2+) site. Residue K278 is part of the active site. Positions 289, 348, and 350 each coordinate Mn(2+). R352 is a catalytic residue.

Belongs to the peptidase M17 family. Mn(2+) serves as cofactor.

Its subcellular location is the cytoplasm. The enzyme catalyses Release of an N-terminal amino acid, Xaa-|-Yaa-, in which Xaa is preferably Leu, but may be other amino acids including Pro although not Arg or Lys, and Yaa may be Pro. Amino acid amides and methyl esters are also readily hydrolyzed, but rates on arylamides are exceedingly low.. The catalysed reaction is Release of an N-terminal amino acid, preferentially leucine, but not glutamic or aspartic acids.. Functionally, presumably involved in the processing and regular turnover of intracellular proteins. Catalyzes the removal of unsubstituted N-terminal amino acids from various peptides. This is Probable cytosol aminopeptidase from Azotobacter vinelandii (strain DJ / ATCC BAA-1303).